Consider the following 312-residue polypeptide: tRNA dimethylallyltransferase (312 aa).

An ATP-binding site is contributed by glycine 12–serine 19. Residue threonine 14 to serine 19 coordinates substrate. Interaction with substrate tRNA stretches follow at residues aspartate 38–leucine 41 and glutamine 162–arginine 166.

Belongs to the IPP transferase family. In terms of assembly, monomer. Mg(2+) serves as cofactor.

It carries out the reaction adenosine(37) in tRNA + dimethylallyl diphosphate = N(6)-dimethylallyladenosine(37) in tRNA + diphosphate. Catalyzes the transfer of a dimethylallyl group onto the adenine at position 37 in tRNAs that read codons beginning with uridine, leading to the formation of N6-(dimethylallyl)adenosine (i(6)A). This is tRNA dimethylallyltransferase from Buchnera aphidicola subsp. Cinara cedri (strain Cc).